We begin with the raw amino-acid sequence, 156 residues long: ATP synthase subunit b (156 aa).

A helical membrane pass occupies residues 11–31 (AIAFVLFVLFCMKYVWPPLMA).

It belongs to the ATPase B chain family. In terms of assembly, F-type ATPases have 2 components, F(1) - the catalytic core - and F(0) - the membrane proton channel. F(1) has five subunits: alpha(3), beta(3), gamma(1), delta(1), epsilon(1). F(0) has three main subunits: a(1), b(2) and c(10-14). The alpha and beta chains form an alternating ring which encloses part of the gamma chain. F(1) is attached to F(0) by a central stalk formed by the gamma and epsilon chains, while a peripheral stalk is formed by the delta and b chains.

The protein resides in the cell inner membrane. F(1)F(0) ATP synthase produces ATP from ADP in the presence of a proton or sodium gradient. F-type ATPases consist of two structural domains, F(1) containing the extramembraneous catalytic core and F(0) containing the membrane proton channel, linked together by a central stalk and a peripheral stalk. During catalysis, ATP synthesis in the catalytic domain of F(1) is coupled via a rotary mechanism of the central stalk subunits to proton translocation. In terms of biological role, component of the F(0) channel, it forms part of the peripheral stalk, linking F(1) to F(0). In Citrobacter koseri (strain ATCC BAA-895 / CDC 4225-83 / SGSC4696), this protein is ATP synthase subunit b.